A 188-amino-acid chain; its full sequence is Large ribosomal subunit protein uL22 (188 aa).

Positions 155–188 (STPEGAKKGKKKKGTKDAVEKSSKRVKTAATAAH) are disordered.

The protein belongs to the universal ribosomal protein uL22 family.

The polypeptide is Large ribosomal subunit protein uL22 (RpL17) (Agriotes lineatus (Lined click beetle)).